The following is an 80-amino-acid chain: Lantibiotic Flvalpha.c (80 aa).

A propeptide spans 1–38 (MNKNPIYRSEEEAKNIACGNVAAELDENSQALDAINGA) (cleaved by FlvT). Threonine 43 and threonine 47 each carry 2,3-didehydrobutyrine; by FlvM1. Positions 52-55 (TLGC) form a cross-link, beta-methyllanthionine (Thr-Cys); by FlvM1. Positions 58–68 (SYGLGNGGYCC) form a cross-link, lanthionine (Ser-Cys); by FlvM1. Cross-links (beta-methyllanthionine (Thr-Cys); by FlvM1) lie at residues 69-74 (TYTVEC) and 71-78 (TVECSKTC).

The lanthionine formed by Ser-58 and Cys-68 forms a putative lipid II binding motif. Post-translationally, maturation of FlvA1 peptides involves the enzymatic conversion of Thr, and Ser into dehydrated AA and the formation of thioether bonds with cysteines. Modifications are processed by the flavecin synthetase FlvM1. This is followed by membrane translocation and cleavage of the modified precursor. In terms of processing, contains DL-lanthionine and DL-beta-methyllanthionine, when coepressed in E.coli with the flavecin synthetase FlvM1.

It is found in the secreted. In terms of biological role, lanthionine-containing peptide antibiotic (lantibiotic) only active on Gram-positive bacteria in synergy with Flvbeta peptides, which are encoded by the same operon than Flvalpha.a. Shows antibacterial activity in synergy with Flvbeta.b, Flvbeta.c, Flvbeta.e and Flvbeta.g. Does not show antibacterial activity when tested with Flvbeta.a, Flvbeta.d, Flvbeta.f and Flvbeta.h. The bactericidal activity of lantibiotics is based on depolarization of energized bacterial cytoplasmic membranes, initiated by the formation of aqueous transmembrane pores. This Ruminococcus flavefaciens protein is Lantibiotic Flvalpha.c.